Reading from the N-terminus, the 385-residue chain is Putative glutamate--cysteine ligase 2 (385 aa).

Belongs to the glutamate--cysteine ligase type 2 family. YbdK subfamily.

It carries out the reaction L-cysteine + L-glutamate + ATP = gamma-L-glutamyl-L-cysteine + ADP + phosphate + H(+). In terms of biological role, ATP-dependent carboxylate-amine ligase which exhibits weak glutamate--cysteine ligase activity. This chain is Putative glutamate--cysteine ligase 2, found in Herpetosiphon aurantiacus (strain ATCC 23779 / DSM 785 / 114-95).